Consider the following 510-residue polypeptide: Cytochrome P450 52C2 (510 aa).

Heme is bound at residue Cys458.

This sequence belongs to the cytochrome P450 family. Requires heme as cofactor.

Its subcellular location is the membrane. Functionally, together with an NADPH cytochrome P450 the enzyme system catalyzes the terminal hydroxylation as the first step in the assimilation of alkanes and fatty acids. The sequence is that of Cytochrome P450 52C2 (CYP52C2) from Candida maltosa (Yeast).